The chain runs to 66 residues: Alpha-actitoxin-Ms11a-2 (66 aa).

Positions 1–24 (MASKIFFVLAVFLVMSAVLPESFA) are cleaved as a signal peptide. Cystine bridges form between Cys26/Cys41, Cys33/Cys46, and Cys40/Cys61.

It localises to the secreted. The protein resides in the nematocyst. Functionally, alpha-toxins act on postsynaptic membranes, they bind to the nicotinic acetylcholine receptors (nAChR) and thus inhibit them. This toxin competes with alpha-bungarotoxin for binding to orthosteric sites on muscle-type T.carlifornicus (IC(50)=1080 nM) and human alpha-7/CHRNA7 nAChRs (IC(50)=14.13 uM). This Metridium senile (Brown sea anemone) protein is Alpha-actitoxin-Ms11a-2.